The primary structure comprises 82 residues: ATP synthase subunit c (82 aa).

2 consecutive transmembrane segments (helical) span residues 7 to 27 and 53 to 73; these read LVAL…SIGI and FILA…ALLF.

This sequence belongs to the ATPase C chain family. As to quaternary structure, F-type ATPases have 2 components, F(1) - the catalytic core - and F(0) - the membrane proton channel. F(1) has five subunits: alpha(3), beta(3), gamma(1), delta(1), epsilon(1). F(0) has three main subunits: a(1), b(2) and c(10-14). The alpha and beta chains form an alternating ring which encloses part of the gamma chain. F(1) is attached to F(0) by a central stalk formed by the gamma and epsilon chains, while a peripheral stalk is formed by the delta and b chains.

It is found in the cell inner membrane. Its function is as follows. F(1)F(0) ATP synthase produces ATP from ADP in the presence of a proton or sodium gradient. F-type ATPases consist of two structural domains, F(1) containing the extramembraneous catalytic core and F(0) containing the membrane proton channel, linked together by a central stalk and a peripheral stalk. During catalysis, ATP synthesis in the catalytic domain of F(1) is coupled via a rotary mechanism of the central stalk subunits to proton translocation. Key component of the F(0) channel; it plays a direct role in translocation across the membrane. A homomeric c-ring of between 10-14 subunits forms the central stalk rotor element with the F(1) delta and epsilon subunits. This Acidovorax ebreus (strain TPSY) (Diaphorobacter sp. (strain TPSY)) protein is ATP synthase subunit c.